We begin with the raw amino-acid sequence, 478 residues long: Tubulin gamma chain (478 aa).

A GTP-binding site is contributed by 141–147; sequence AGGTGSG. The tract at residues 451 to 478 is disordered; that stretch reads ISQKESSSLANENGNGANNKPGKSAMAL. Residues 459 to 468 show a composition bias toward polar residues; the sequence is LANENGNGAN.

It belongs to the tubulin family.

It is found in the cytoplasm. Its subcellular location is the cytoskeleton. The protein resides in the microtubule organizing center. It localises to the centrosome. Functionally, tubulin is the major constituent of microtubules. The gamma chain is found at microtubule organizing centers (MTOC) such as the spindle poles or the centrosome, suggesting that it is involved in the minus-end nucleation of microtubule assembly. The sequence is that of Tubulin gamma chain from Reticulomyxa filosa.